The chain runs to 294 residues: Acetylglutamate kinase (294 aa).

Substrate-binding positions include 63–64 (GG), arginine 85, and asparagine 188.

Belongs to the acetylglutamate kinase family. ArgB subfamily.

The protein localises to the cytoplasm. The catalysed reaction is N-acetyl-L-glutamate + ATP = N-acetyl-L-glutamyl 5-phosphate + ADP. The protein operates within amino-acid biosynthesis; L-arginine biosynthesis; N(2)-acetyl-L-ornithine from L-glutamate: step 2/4. Its function is as follows. Catalyzes the ATP-dependent phosphorylation of N-acetyl-L-glutamate. The protein is Acetylglutamate kinase of Methanococcus maripaludis (strain C5 / ATCC BAA-1333).